The primary structure comprises 874 residues: DNA mismatch repair protein MutS (874 aa).

Over residues 1–12 (MSNDRPLTHSEA) the composition is skewed to basic and acidic residues. The interval 1 to 20 (MSNDRPLTHSEAESSALRLG) is disordered. Residue 661–668 (GPNASGKS) coordinates ATP. Residues 854 to 874 (RKSSMGDPPTAPEINQGELPF) form a disordered region.

This sequence belongs to the DNA mismatch repair MutS family.

Functionally, this protein is involved in the repair of mismatches in DNA. It is possible that it carries out the mismatch recognition step. This protein has a weak ATPase activity. The sequence is that of DNA mismatch repair protein MutS from Thermosynechococcus vestitus (strain NIES-2133 / IAM M-273 / BP-1).